Here is a 237-residue protein sequence, read N- to C-terminus: Ribosomal RNA small subunit methyltransferase G (237 aa).

S-adenosyl-L-methionine is bound by residues Gly78, Phe83, 129–130 (AE), and Arg148. Residues 216 to 237 (SKKKETPNKYPRKAGTPNKKPL) form a disordered region.

It belongs to the methyltransferase superfamily. RNA methyltransferase RsmG family.

The protein resides in the cytoplasm. Its function is as follows. Specifically methylates the N7 position of a guanine in 16S rRNA. The chain is Ribosomal RNA small subunit methyltransferase G from Streptococcus agalactiae serotype III (strain NEM316).